A 65-amino-acid chain; its full sequence is Neurotoxin Bot2 (65 aa).

One can recognise an LCN-type CS-alpha/beta domain in the interval 2-64; that stretch reads RDAYIAQPEN…VPIRIEGKCH (63 aa). 4 cysteine pairs are disulfide-bonded: Cys-12-Cys-63, Cys-16-Cys-36, Cys-22-Cys-46, and Cys-26-Cys-48. Phenylalanine amide is present on Phe-65.

The protein belongs to the long (4 C-C) scorpion toxin superfamily. Sodium channel inhibitor family. Alpha subfamily. Expressed by the venom gland.

It is found in the secreted. Binds to sodium channels (Nav) and inhibits the inactivation of the activated channels, thereby blocking neuronal transmission. The polypeptide is Neurotoxin Bot2 (Buthus occitanus tunetanus (Common European scorpion)).